A 190-amino-acid chain; its full sequence is Endoribonuclease YbeY (190 aa).

Positions 147, 151, and 157 each coordinate Zn(2+).

The protein belongs to the endoribonuclease YbeY family. Requires Zn(2+) as cofactor.

Its subcellular location is the cytoplasm. Single strand-specific metallo-endoribonuclease involved in late-stage 70S ribosome quality control and in maturation of the 3' terminus of the 16S rRNA. The chain is Endoribonuclease YbeY from Nitrobacter winogradskyi (strain ATCC 25391 / DSM 10237 / CIP 104748 / NCIMB 11846 / Nb-255).